Consider the following 430-residue polypeptide: Glutamate-1-semialdehyde 2,1-aminomutase (430 aa).

The residue at position 267 (Lys-267) is an N6-(pyridoxal phosphate)lysine.

The protein belongs to the class-III pyridoxal-phosphate-dependent aminotransferase family. HemL subfamily. Homodimer. It depends on pyridoxal 5'-phosphate as a cofactor.

The protein resides in the cytoplasm. The enzyme catalyses (S)-4-amino-5-oxopentanoate = 5-aminolevulinate. It participates in porphyrin-containing compound metabolism; protoporphyrin-IX biosynthesis; 5-aminolevulinate from L-glutamyl-tRNA(Glu): step 2/2. The chain is Glutamate-1-semialdehyde 2,1-aminomutase from Natranaerobius thermophilus (strain ATCC BAA-1301 / DSM 18059 / JW/NM-WN-LF).